Reading from the N-terminus, the 51-residue chain is Sperm protamine P1 (51 aa).

This sequence belongs to the protamine P1 family. In terms of assembly, cross-linked by interchain disulfide bonds around the DNA-helix. As to expression, testis.

The protein resides in the nucleus. Its subcellular location is the chromosome. In terms of biological role, protamines substitute for histones in the chromatin of sperm during the haploid phase of spermatogenesis. They compact sperm DNA into a highly condensed, stable and inactive complex. The sequence is that of Sperm protamine P1 (PRM1) from Pongo pygmaeus (Bornean orangutan).